We begin with the raw amino-acid sequence, 336 residues long: Glucokinase (336 aa).

Position 13–18 (13–18 (ADVGGT)) interacts with ATP.

The protein belongs to the bacterial glucokinase family.

It localises to the cytoplasm. The enzyme catalyses D-glucose + ATP = D-glucose 6-phosphate + ADP + H(+). The sequence is that of Glucokinase from Cupriavidus metallidurans (strain ATCC 43123 / DSM 2839 / NBRC 102507 / CH34) (Ralstonia metallidurans).